We begin with the raw amino-acid sequence, 2696 residues long: Protein ILITYHIA (2696 aa).

Residues 1–18 (MSYSMVNASSAVSSPETA) are compositionally biased toward polar residues. A disordered region spans residues 1–26 (MSYSMVNASSAVSSPETAKNSDEPPP). HEAT repeat units follow at residues 162–204 (DIAP…MKTF), 253–290 (STQA…IYSL), 303–340 (KDSP…DVLN), 364–400 (EFQT…IDLS), 401–438 (KYAL…KSSN), 487–525 (SLSR…RSSV), 526–562 (AIQP…NPDT), 564–601 (SQIS…SKIA), and 642–677 (VVCV…FLLC). The disordered stretch occupies residues 901–941 (KQEPSSNHSLKKGLASRETANSGRRDTAKLTKKADKGKTAK). Residues 923-941 (GRRDTAKLTKKADKGKTAK) show a composition bias toward basic and acidic residues. 18 HEAT repeats span residues 985-1021 (HSQL…CTVQ), 1082-1118 (DTFT…GLQA), 1188-1225 (HDLG…ESPS), 1273-1311 (KDLP…KHGK), 1315-1355 (SLLF…HLAR), 1358-1395 (PKVH…SKQE), 1397-1433 (APAL…GFGI), 1436-1474 (LKKY…KLGK), 1478-1515 (PYVI…QLSA), 1516-1553 (YGVK…CAPQ), 1564-1600 (PKLT…VIKN), 1601-1638 (PEIS…NSVD), 1640-1677 (PSLA…LVTE), 1683-1720 (PYIG…GMGE), 1722-1759 (NFPD…ALGT), 1761-1797 (YFEN…SLGA), 1801-1838 (KYLQ…HHAT), and 1840-1876 (SLPL…KVAG). At Ser1887 the chain carries Phosphoserine. 19 HEAT repeats span residues 1908–1945 (DKRN…NTPK), 1949–1986 (EIMP…KLGE), 1988–2024 (VLPL…SAGR), 2029–2066 (SFMD…SAGL), 2067–2102 (QAMD…VRTA), 2104–2137 (VLPH…AGFN), 2138–2175 (THLG…VIDE), 2177–2213 (GVET…SSKL), 2217–2254 (DEAP…SVPK), 2258–2292 (PSYI…LCLP), 2293–2330 (KSLK…VTSE), 2335–2373 (EFVI…RGGM), 2377–2414 (PFLP…LSTR), 2416–2450 (DPLV…HAGK), 2455–2492 (AVRV…YLEA), 2494–2530 (QLSV…HNPS), 2536–2573 (SLFS…KQLA), 2580–2617 (KVVI…DNPS), and 2620–2658 (MANI…LTKG).

The protein belongs to the GCN1 family.

Involved in immunity against bacterial infection and in non-host resistance. Required for embryo development. Required for systemic acquired resistance, but functions in an salicylic acid-independent manner. Required for bacterium-triggered stomatal closure response. The polypeptide is Protein ILITYHIA (Arabidopsis thaliana (Mouse-ear cress)).